The sequence spans 817 residues: General transcription factor 3C polypeptide 4 (817 aa).

An N-acetylmethionine modification is found at methionine 1. The tract at residues methionine 1–serine 40 is disordered. Residue lysine 221 forms a Glycyl lysine isopeptide (Lys-Gly) (interchain with G-Cter in SUMO2) linkage. A phosphoserine mark is found at serine 600 and serine 607. Residues leucine 603–glutamate 658 form a disordered region. A Glycyl lysine isopeptide (Lys-Gly) (interchain with G-Cter in SUMO2) cross-link involves residue lysine 624. Serine 647 bears the Phosphoserine mark.

It belongs to the TFIIIC subunit 4 family. Part of the TFIIIC subcomplex TFIIIC2, consisting of six subunits, GTF3C1, GTF3C2, GTF3C3, GTF3C4, GTF3C5 and GTF3C6. Interacts with BRF1, GTF3C1, GTF3C2, GTF3C5, GTF3C6, POLR3C and POLR3F.

It localises to the nucleus. The enzyme catalyses L-lysyl-[protein] + acetyl-CoA = N(6)-acetyl-L-lysyl-[protein] + CoA + H(+). Functionally, essential for RNA polymerase III to make a number of small nuclear and cytoplasmic RNAs, including 5S RNA, tRNA, and adenovirus-associated (VA) RNA of both cellular and viral origin. Has histone acetyltransferase activity (HAT) with unique specificity for free and nucleosomal H3. May cooperate with GTF3C5 in facilitating the recruitment of TFIIIB and RNA polymerase through direct interactions with BRF1, POLR3C and POLR3F. May be localized close to the A box. The chain is General transcription factor 3C polypeptide 4 (Gtf3c4) from Mus musculus (Mouse).